A 245-amino-acid polypeptide reads, in one-letter code: DNA polymerase sliding clamp (245 aa).

Belongs to the PCNA family. In terms of assembly, homotrimer. The subunits circularize to form a toroid; DNA passes through its center. Replication factor C (RFC) is required to load the toroid on the DNA.

Functionally, sliding clamp subunit that acts as a moving platform for DNA processing. Responsible for tethering the catalytic subunit of DNA polymerase and other proteins to DNA during high-speed replication. This chain is DNA polymerase sliding clamp, found in Methanococcoides burtonii (strain DSM 6242 / NBRC 107633 / OCM 468 / ACE-M).